Consider the following 144-residue polypeptide: Large ribosomal subunit protein uL16 (144 aa).

It belongs to the universal ribosomal protein uL16 family. In terms of assembly, part of the 50S ribosomal subunit.

Binds 23S rRNA and is also seen to make contacts with the A and possibly P site tRNAs. The polypeptide is Large ribosomal subunit protein uL16 (Oceanobacillus iheyensis (strain DSM 14371 / CIP 107618 / JCM 11309 / KCTC 3954 / HTE831)).